The following is a 328-amino-acid chain: Biotin synthase (328 aa).

The region spanning 41–260 is the Radical SAM core domain; the sequence is TAIETASLLS…VALARILMPA (220 aa). [4Fe-4S] cluster is bound by residues cysteine 56, cysteine 60, and cysteine 63. Residues cysteine 100, cysteine 131, cysteine 191, and arginine 264 each coordinate [2Fe-2S] cluster.

It belongs to the radical SAM superfamily. Biotin synthase family. In terms of assembly, homodimer. It depends on [4Fe-4S] cluster as a cofactor. [2Fe-2S] cluster is required as a cofactor.

It catalyses the reaction (4R,5S)-dethiobiotin + (sulfur carrier)-SH + 2 reduced [2Fe-2S]-[ferredoxin] + 2 S-adenosyl-L-methionine = (sulfur carrier)-H + biotin + 2 5'-deoxyadenosine + 2 L-methionine + 2 oxidized [2Fe-2S]-[ferredoxin]. The protein operates within cofactor biosynthesis; biotin biosynthesis; biotin from 7,8-diaminononanoate: step 2/2. Its function is as follows. Catalyzes the conversion of dethiobiotin (DTB) to biotin by the insertion of a sulfur atom into dethiobiotin via a radical-based mechanism. The polypeptide is Biotin synthase (Cereibacter sphaeroides (strain ATCC 17029 / ATH 2.4.9) (Rhodobacter sphaeroides)).